We begin with the raw amino-acid sequence, 289 residues long: Lipoyl synthase (289 aa).

[4Fe-4S] cluster is bound by residues Cys33, Cys38, Cys44, Cys59, Cys63, Cys66, and Ser274. In terms of domain architecture, Radical SAM core spans 45–263 (FAGGTATFLI…SQGESELGFL (219 aa)).

This sequence belongs to the radical SAM superfamily. Lipoyl synthase family. [4Fe-4S] cluster serves as cofactor.

The protein resides in the cytoplasm. The catalysed reaction is [[Fe-S] cluster scaffold protein carrying a second [4Fe-4S](2+) cluster] + N(6)-octanoyl-L-lysyl-[protein] + 2 oxidized [2Fe-2S]-[ferredoxin] + 2 S-adenosyl-L-methionine + 4 H(+) = [[Fe-S] cluster scaffold protein] + N(6)-[(R)-dihydrolipoyl]-L-lysyl-[protein] + 4 Fe(3+) + 2 hydrogen sulfide + 2 5'-deoxyadenosine + 2 L-methionine + 2 reduced [2Fe-2S]-[ferredoxin]. The protein operates within protein modification; protein lipoylation via endogenous pathway; protein N(6)-(lipoyl)lysine from octanoyl-[acyl-carrier-protein]: step 2/2. In terms of biological role, catalyzes the radical-mediated insertion of two sulfur atoms into the C-6 and C-8 positions of the octanoyl moiety bound to the lipoyl domains of lipoate-dependent enzymes, thereby converting the octanoylated domains into lipoylated derivatives. The chain is Lipoyl synthase from Synechococcus sp. (strain RCC307).